Reading from the N-terminus, the 513-residue chain is Mesoderm induction early response protein 1 (513 aa).

Positions 1–16 are enriched in low complexity; that stretch reads MAEPSVESSSPGGSAT. Residues 1–174 are disordered; that stretch reads MAEPSVESSS…EEESEEDEDY (174 aa). Basic and acidic residues-rich tracts occupy residues 17–36 and 46–63; these read SDDHEFDPSADMLVHDFDDE and EGERNFNSEIEDLNRESD. Positions 82–107 are enriched in acidic residues; the sequence is QEDDDDEDEEEEEEEGEDDDDVDNDD. Residues 131 to 146 show a composition bias toward polar residues; the sequence is QSSNDDPAPSVASQDP. Positions 157–261 are interaction with HDAC1; the sequence is YFDTNSEIEE…IKDNEQALYE (105 aa). The span at 162–174 shows a compositional bias: acidic residues; the sequence is SEIEEESEEDEDY. In terms of domain architecture, ELM2 spans 182-280; the sequence is KEIMVGSMFQ…ESLRRLRFNV (99 aa). Residues 285 to 337 form the SANT domain; that stretch reads EELSVWTEEECRNFEQGLKVYGKDFHVIQANKVRTRSVGECVAFYYMWKKSER. Positions 368–513 are disordered; that stretch reads ESESAASSRA…KLEELETLDD (146 aa). Basic and acidic residues-rich tracts occupy residues 416–425 and 463–476; these read PSKDEAKPEG and SRSENDFEEKNERP. Residues 483-500 show a composition bias toward polar residues; that stretch reads NSNGKESPGSSEFFQEAN.

The protein localises to the nucleus. Transcriptional repressor regulating the expression of a number of genes. Probably functions through recruitment of histone deacetylases involved in chromatin silencing. The polypeptide is Mesoderm induction early response protein 1 (MIER1) (Gallus gallus (Chicken)).